Consider the following 464-residue polypeptide: Hepatocyte nuclear factor 4-alpha (464 aa).

Positions 57–132 (NSLCAICGDR…AGMKKEAVQN (76 aa)) form a DNA-binding region, nuclear receptor. NR C4-type zinc fingers lie at residues 60–80 (CAICGDRATGKHYGASSCDGC) and 96–120 (CRFSRQCVVDKDKRNQCRYCRLKKC). In terms of domain architecture, NR LBD spans 147 to 376 (SSLPSINVLI…NLLQEMLLGG (230 aa)). The 9aaTAD motif lies at 367 to 375 (NLLQEMLLG). Residues 410 to 421 (SQLHNGQMSTPE) are compositionally biased toward polar residues. Positions 410–433 (SQLHNGQMSTPETPQPSPPAGSGA) are disordered.

It belongs to the nuclear hormone receptor family. NR2 subfamily. In terms of assembly, homodimerization is required for HNF4-alpha to bind to its recognition site. In terms of tissue distribution, expressed in liver and kidney.

Its subcellular location is the nucleus. Transcriptional regulator; binds and activates the promoter for the HNF1-alpha gene. Potential initiator of a transcriptional cascade within a subset of cells committed to a specific developmental program. Could be a determinant for asymmetry in early development. May play a role in the regulation of the circadian clock. The chain is Hepatocyte nuclear factor 4-alpha (hnf4a) from Xenopus laevis (African clawed frog).